The chain runs to 188 residues: Pallidipin (188 aa).

A signal peptide spans 1 to 18; it reads MKVIIAATLLGILMHAFA. 3 disulfides stabilise this stretch: Cys21–Cys137, Cys55–Cys184, and Cys89–Cys105.

The protein belongs to the calycin superfamily. Triabin family. Expressed in salivary glands.

It localises to the secreted. Functionally, has been described as a specific inhibitor of collagen-induced platelet aggregation. However, as it does not affect platelet shape change or adhesion, it is plausible that it exerts its antiplatelet activity by a mechanism similar to that of triplatin, moubatin and dipetalodipin as scavenging eicosanoids involved in inflammation such as thromboxane A2 (TXA2). The chain is Pallidipin from Meccus pallidipennis (Triatomine bug).